We begin with the raw amino-acid sequence, 484 residues long: Probable glycine dehydrogenase (decarboxylating) subunit 2 (484 aa).

Lys-264 is modified (N6-(pyridoxal phosphate)lysine).

This sequence belongs to the GcvP family. C-terminal subunit subfamily. The glycine cleavage system is composed of four proteins: P, T, L and H. In this organism, the P 'protein' is a heterodimer of two subunits. Requires pyridoxal 5'-phosphate as cofactor.

The enzyme catalyses N(6)-[(R)-lipoyl]-L-lysyl-[glycine-cleavage complex H protein] + glycine + H(+) = N(6)-[(R)-S(8)-aminomethyldihydrolipoyl]-L-lysyl-[glycine-cleavage complex H protein] + CO2. The glycine cleavage system catalyzes the degradation of glycine. The P protein binds the alpha-amino group of glycine through its pyridoxal phosphate cofactor; CO(2) is released and the remaining methylamine moiety is then transferred to the lipoamide cofactor of the H protein. This is Probable glycine dehydrogenase (decarboxylating) subunit 2 from Legionella pneumophila (strain Lens).